The chain runs to 931 residues: Semaphorin-6C (931 aa).

The N-terminal stretch at 1–25 (MPRAPHSMPLLLLLLLLSSLPQAQA) is a signal peptide. Topologically, residues 26–605 (AFPQDPTPLL…ASASRSIPIP (580 aa)) are extracellular. The Sema domain occupies 31–517 (PTPLLTSDLQ…FPGCIVYLSL (487 aa)). An N-linked (GlcNAc...) asparagine glycan is attached at asparagine 71. Cystine bridges form between cysteine 112/cysteine 122, cysteine 140/cysteine 149, cysteine 263/cysteine 374, and cysteine 288/cysteine 333. An N-linked (GlcNAc...) asparagine glycan is attached at asparagine 287. Residue asparagine 438 is glycosylated (N-linked (GlcNAc...) asparagine). Cystine bridges form between cysteine 480–cysteine 511, cysteine 520–cysteine 538, cysteine 526–cysteine 571, and cysteine 530–cysteine 546. A disordered region spans residues 556-591 (DVDLTGNQESTEHGDCQDGATGSQSGPGDSAYGVRR). A helical transmembrane segment spans residues 606–626 (LLLACVAAAFALGASVSGLLV). The Cytoplasmic segment spans residues 627–931 (SCACRRANRR…PAPHGGHFNF (305 aa)). 2 disordered regions span residues 655 to 747 (LARL…GGPA) and 777 to 931 (HGPQ…HFNF). Low complexity predominate over residues 693 to 708 (PPELACLPTPETTPEL). A compositionally biased stretch (basic and acidic residues) spans 893–906 (PEGHRGRSLKRVDV). Over residues 911-923 (SPKPPLASPPQPA) the composition is skewed to pro residues.

The protein belongs to the semaphorin family.

It localises to the cell membrane. Its function is as follows. May be a stop signal for the dorsal root ganglion neurons in their target areas, and possibly also for other neurons. May also be involved in the maintenance and remodeling of neuronal connections. In Mus musculus (Mouse), this protein is Semaphorin-6C (Sema6c).